The chain runs to 447 residues: Oxysterols receptor LXR-alpha (447 aa).

Residues 1-88 (MSLWLEAPVP…LRPQKRKKGP (88 aa)) form a disordered region. The interval 1–96 (MSLWLEAPVP…GPAPKMLGNE (96 aa)) is transactivation AF-1; required for ligand-independent transactivation function. Positions 95–170 (NELCSVCGDK…AGMREECVLS (76 aa)) form a DNA-binding region, nuclear receptor. NR C4-type zinc fingers lie at residues 98–118 (CSVC…CEGC) and 134–158 (CHSG…LRKC). The interval 178-203 (KMKRQEEEQAQATSAPPRASSPPQVL) is disordered. Low complexity predominate over residues 187-203 (AQATSAPPRASSPPQVL). Residues 205–447 (QLSPEQLGMI…LLSEIWDVHE (243 aa)) form a transactivation AF-2; required for ligand-dependent transactivation function; mediates interaction with CCAR2 region. One can recognise an NR LBD domain in the interval 209-447 (EQLGMIEKLV…LLSEIWDVHE (239 aa)).

Belongs to the nuclear hormone receptor family. NR1 subfamily. Heterodimer of NR1H3 and RXR (retinoic acid receptor). Interacts with CCAR2 (via N-terminus) in a ligand-independent manner. Interacts with SIRT1 and this interaction is inhibited by CCAR2. In terms of processing, ubiquitinated by UBR5, leading to its degradation: UBR5 specifically recognizes and binds ligand-bound NR1H3 when it is not associated with coactivators (NCOAs). In presence of NCOAs, the UBR5-degron is not accessible, preventing its ubiquitination and degradation.

It localises to the nucleus. It is found in the cytoplasm. Its function is as follows. Nuclear receptor that exhibits a ligand-dependent transcriptional activation activity. Interaction with retinoic acid receptor (RXR) shifts RXR from its role as a silent DNA-binding partner to an active ligand-binding subunit in mediating retinoid responses through target genes defined by LXRES. LXRES are DR4-type response elements characterized by direct repeats of two similar hexanuclotide half-sites spaced by four nucleotides. Plays an important role in the regulation of cholesterol homeostasis, regulating cholesterol uptake through MYLIP-dependent ubiquitination of LDLR, VLDLR and LRP8. Interplays functionally with RORA for the regulation of genes involved in liver metabolism. Induces LPCAT3-dependent phospholipid remodeling in endoplasmic reticulum (ER) membranes of hepatocytes, driving SREBF1 processing and lipogenesis. Via LPCAT3, triggers the incorporation of arachidonate into phosphatidylcholines of ER membranes, increasing membrane dynamics and enabling triacylglycerols transfer to nascent very low-density lipoprotein (VLDL) particles. Via LPCAT3 also counteracts lipid-induced ER stress response and inflammation, likely by modulating SRC kinase membrane compartmentalization and limiting the synthesis of lipid inflammatory mediators. In Bos taurus (Bovine), this protein is Oxysterols receptor LXR-alpha (NR1H3).